The chain runs to 707 residues: Terpene cyclase/mutase atnI (707 aa).

A compositionally biased stretch (polar residues) spans methionine 1–threonine 20. The disordered stretch occupies residues methionine 1 to glycine 22. PFTB repeat units follow at residues alanine 130–glycine 173, leucine 494–threonine 535, threonine 571–alanine 608, and serine 620–alanine 661.

It belongs to the terpene cyclase/mutase family.

The protein operates within secondary metabolite biosynthesis; terpenoid biosynthesis. Terpene cyclase/mutase; part of the gene cluster that mediates the biosynthesis of the meroterpenoids arthripenoids. The pathway begins with the HR-PKS atnH that catalyzes two chain-extension steps to form a reduced triketide, which then primes the SAT domain in the NR-PKS atnG to initiate three more cycles of extension to give a linear hexaketide corresponding to the polyketide part of arthripenoids. The FAD-dependent monooxygenase atnJ then performs an oxidative decarboxylation at C11 of the atnH/atnG product, via an electrophilic aromatic hydroxylation with concomitant ipso-decarboxylation. The membrane-bound polyprenyl transferase atnF then introduces a farnesyl group before the FAD-dependent monooxygenase atnK functions as the first epoxidase on terminal C12'-C13' olefin, followed by a second epoxidation on C7'-C8' catalyzed by atnA. The terpene cyclase/mutase atnI then initiates the sequential tricyclic ring formation through protonation of the terminal epoxide and catalyzes the regioselective and stereoselective 6/6/6-tricyclic ring formation. The cytochrome P450 monooxygenase atnM is responsible for hydroxylating both C1' and C10'. The next steps may involve ketoreduction and acetyl transfer by the ketoreductase atnB and the acetyltransferase atnC, and lead to the production of arthripenoid B, the final biosynthetic product of the atn cluster. The hydroquinone moiety in arthripenoid B is prone to undergo spontaneous oxidation to afford a benzoquinone compound, a key intermediate for generating structure diversity. For instance, addition of a cysteine followed by ring contraction gives arthripenoid A, tautomerization gives the main product arthripenoid C, addition of a molecular of water or amine affords arthripenoid D or E, respectively, and loss of one water forms arthripenoid F. The protein is Terpene cyclase/mutase atnI of Arthrinium sp.